The chain runs to 87 residues: MVKNSPISVIPQEEKRGSVEFQVFNFTNKIERLTSHLELHRRDYLSQRGLRKILGKRQRLLVYLSKKNRVRYRELIGQLGIREPKTG.

This sequence belongs to the universal ribosomal protein uS15 family. Part of the 30S ribosomal subunit.

Its subcellular location is the plastid. It is found in the chloroplast. The protein is Small ribosomal subunit protein uS15c (rps15) of Nymphaea alba (White water-lily).